Consider the following 541-residue polypeptide: Chaperonin GroEL 1 (541 aa).

ATP-binding positions include 29–32, 86–90, Gly413, and Asp492; these read TLGP and DGTTT.

It belongs to the chaperonin (HSP60) family. Forms a cylinder of 14 subunits composed of two heptameric rings stacked back-to-back. Interacts with the co-chaperonin GroES.

The protein localises to the cytoplasm. The catalysed reaction is ATP + H2O + a folded polypeptide = ADP + phosphate + an unfolded polypeptide.. In terms of biological role, together with its co-chaperonin GroES, plays an essential role in assisting protein folding. The GroEL-GroES system forms a nano-cage that allows encapsulation of the non-native substrate proteins and provides a physical environment optimized to promote and accelerate protein folding. The protein is Chaperonin GroEL 1 of Rhodococcus jostii (strain RHA1).